The following is an 825-amino-acid chain: NT-3 growth factor receptor (825 aa).

The first 31 residues, 1–31, serve as a signal peptide directing secretion; it reads MDVSLCPAKCSFWRIFLLGSVWLDYVGSVLA. Intrachain disulfides connect cysteine 32-cysteine 38 and cysteine 36-cysteine 45. Over 32-429 the chain is Extracellular; it reads CPANCVCSKT…TVTHKPEEDT (398 aa). N-linked (GlcNAc...) asparagine glycans are attached at residues asparagine 68, asparagine 72, and asparagine 79. LRR repeat units lie at residues 104-125 and 128-149; these read GLQK…AFAK and HLRY…LFQT. N-linked (GlcNAc...) asparagine glycans are attached at residues asparagine 133 and asparagine 163. In terms of domain architecture, LRRCT spans 160 to 209; sequence NFFNCSCDIRWMQLWQEQGEAKLNNQNLYCINADGSQLPLFRMNISQCDL. 2 disulfide bridges follow: cysteine 164–cysteine 189 and cysteine 166–cysteine 207. Residues asparagine 203, asparagine 218, asparagine 232, asparagine 259, asparagine 267, asparagine 272, and asparagine 294 are each glycosylated (N-linked (GlcNAc...) asparagine). 2 Ig-like C2-type domains span residues 210-300 and 309-382; these read PEIS…VALT and SLEE…IAKN. Cysteine 231 and cysteine 284 are disulfide-bonded. Cysteine 320 and cysteine 362 are disulfide-bonded. Asparagine 375 and asparagine 388 each carry an N-linked (GlcNAc...) asparagine glycan. A helical membrane pass occupies residues 430–453; it reads FGVSIAVGLAAFACVLLVVLFIMI. At 454–825 the chain is on the cytoplasmic side; sequence NKYGRRSKFG…ATPIYLDILG (372 aa). Serine 493 bears the Phosphoserine mark. Tyrosine 516 carries the post-translational modification Phosphotyrosine; by autocatalysis. Residues 538 to 825 enclose the Protein kinase domain; sequence IVLKRELGEG…ATPIYLDILG (288 aa). ATP contacts are provided by residues 544 to 552 and lysine 572; that span reads LGEGAFGKV. Catalysis depends on aspartate 679, which acts as the Proton acceptor. A phosphotyrosine; by autocatalysis mark is found at tyrosine 705, tyrosine 709, and tyrosine 710.

Belongs to the protein kinase superfamily. Tyr protein kinase family. Insulin receptor subfamily. In terms of assembly, exists in a dynamic equilibrium between monomeric (low affinity) and dimeric (high affinity) structures. Binds SH2B2. Interacts with SQSTM1 and KIDINS220. Interacts with PTPRS. Interacts with MAPK8IP3/JIP3. Post-translationally, ligand-mediated auto-phosphorylation.

The protein resides in the membrane. It catalyses the reaction L-tyrosyl-[protein] + ATP = O-phospho-L-tyrosyl-[protein] + ADP + H(+). Functionally, receptor tyrosine kinase involved in nervous system and probably heart development. Upon binding of its ligand NTF3/neurotrophin-3, NTRK3 autophosphorylates and activates different signaling pathways, including the phosphatidylinositol 3-kinase/AKT and the MAPK pathways, that control cell survival and differentiation. In Macaca fascicularis (Crab-eating macaque), this protein is NT-3 growth factor receptor (NTRK3).